Reading from the N-terminus, the 304-residue chain is PTB domain-containing engulfment adapter protein 1 (304 aa).

T16 carries the phosphothreonine modification. Positions 21–176 (SKHFIPYNAK…AGLQKRIQDL (156 aa)) constitute a PID domain. A coiled-coil region spans residues 158-202 (KDVETRKQIAGLQKRIQDLETENMELKNKVQDLENQLRITQVSAP). Position 223 is a phosphoserine (S223). Positions 223 to 246 (SPISHQSSMPTRNGTQPPPVPSRS) are disordered. The span at 225-237 (ISHQSSMPTRNGT) shows a compositional bias: polar residues.

Belongs to the ced-6 family. In terms of assembly, homodimer. Interacts with clathrin. Interacts with GDP-bound ARF6, but not with GTP-bound ARF6. Part of a complex composed of GULP1, ACAP1 and ARF6. Interacts with ACAP1, LRP1, MEGF10 and STAB2. Widely expressed. Detected in macrophages, pancreas, kidney, skeletal muscle, heart, colon, intestine, lung, placenta and ovary.

Its subcellular location is the cytoplasm. Its function is as follows. May function as an adapter protein. Required for efficient phagocytosis of apoptotic cells. Modulates cellular glycosphingolipid and cholesterol transport. May play a role in the internalization and endosomal trafficking of various LRP1 ligands, such as PSAP. Increases cellular levels of GTP-bound ARF6. This Homo sapiens (Human) protein is PTB domain-containing engulfment adapter protein 1 (GULP1).